Consider the following 330-residue polypeptide: MPLAAAVAASAVVPPRPPPPPPRRARPLRSFTGLILTRDLAALTVARCAPSPPAPAAEAEAEAVAVDEAPPAKPRPRRYPRQYPGEAVGVAEEMRFVAMRLRNPKRTTLKMDDTGAEEEVGDGVSEDASASEEEEEEEDDDDVVEEEEEGAGLEGEWMPSMEGFVKYLVDSKLVFDTVERIVAESTDVAYVYFRKSGLERSARITKDLEWFGGQGIAVPEPSTAGSTYATYLTELAESNAPAFLSHYYNIYFAHTTGGVAIGNKISKKILEGRELEFYKWDSDVELLLKDTREKLNELSKHWSRKDRNLCLKEAAKCFQHLGRIVRLIIL.

Composition is skewed to low complexity over residues 1-13 and 56-69; these read MPLA…SAVV and AAEA…VDEA. Disordered regions lie at residues 1–27, 50–82, and 107–156; these read MPLA…RARP, PSPP…YPRQ, and TTLK…LEGE. A chloroplast-targeting transit peptide spans 1-47; that stretch reads MPLAAAVAASAVVPPRPPPPPPRRARPLRSFTGLILTRDLAALTVAR. A compositionally biased stretch (acidic residues) spans 114–151; it reads TGAEEEVGDGVSEDASASEEEEEEEDDDDVVEEEEEGA.

It belongs to the heme oxygenase family.

Its subcellular location is the plastid. The protein localises to the chloroplast. In terms of biological role, probable inactive heme oxygenase that may play a role in the regulation of phytochrome assembly and photomorphogenesis. In Oryza sativa subsp. japonica (Rice), this protein is Probable inactive heme oxygenase 2, chloroplastic (HO2).